The following is a 1266-amino-acid chain: SUMO-interacting motif-containing protein 1 (1266 aa).

The disordered stretch occupies residues 1 to 35; it reads MEDFIVISDDSGSESSAGTRSGRARRLRRALSRTP. The span at 22–31 shows a compositional bias: basic residues; that stretch reads GRARRLRRAL. Residues 45 to 49 carry the SUMO interaction motif 1 (SIM); mediates the binding to polysumoylated substrates motif; the sequence is FIDLT. The SUMO interaction motif 2 (SIM); mediates the binding to polysumoylated substrates signature appears at 64–68; the sequence is VIDLT. 2 stretches are compositionally biased toward low complexity: residues 183–197 and 532–553; these read SPFSSTSNNSSSSSN and SSGGVTQSSGGVIQSSSGVPQS. Disordered regions lie at residues 183–206, 532–732, 756–812, and 1024–1052; these read SPFSSTSNNSSSSSNQRTSLPCPQ, SSGG…SGDV, NRHS…PGSA, and LTPPQDETQTSPGPGVLKTSSDHLSPQPN. Residues 560 to 571 show a composition bias toward polar residues; that stretch reads SPGSVSQSSGDV. The segment covering 764–777 has biased composition (low complexity); sequence SAPSSPSCSANPLS. The tract at residues 779-1266 is interaction with SLF2; sequence QSEFSSEKRP…NPDTEPASER (488 aa). The required for inhibition of CAPN3 protease activity stretch occupies residues 857–1266; the sequence is SKGQKLEPIP…NPDTEPASER (410 aa). Residues 865–1200 form an NSE5-like domain region; sequence IPHRRLRMVT…IDRKDLIIKR (336 aa).

In terms of assembly, forms a heterodimer with SLF2. Interacts (via SIM domains) with SUMO1 and SUMO2. Interacts with CAPN3 and CTBP1. Interacts with SMC6 and ZNF451.

The protein resides in the nucleus. Its subcellular location is the PML body. In terms of biological role, inhibits the protease activity of CAPN3. May play a role in SMC5-SMC6 complex recruitment for viral restriction. Forms a complex with SLF2 and this complex is required to recruit SMC5-SMC6 complex to PML nuclear bodies and sites of viral replication. The sequence is that of SUMO-interacting motif-containing protein 1 (Simc1) from Rattus norvegicus (Rat).